A 630-amino-acid chain; its full sequence is 1-deoxy-D-xylulose-5-phosphate synthase (630 aa).

Residues histidine 72 and 113–115 (GHS) each bind thiamine diphosphate. Residue aspartate 144 participates in Mg(2+) binding. Thiamine diphosphate contacts are provided by residues 145–146 (GA), asparagine 173, tyrosine 284, and glutamate 367. Position 173 (asparagine 173) interacts with Mg(2+).

The protein belongs to the transketolase family. DXPS subfamily. As to quaternary structure, homodimer. It depends on Mg(2+) as a cofactor. Thiamine diphosphate is required as a cofactor.

It carries out the reaction D-glyceraldehyde 3-phosphate + pyruvate + H(+) = 1-deoxy-D-xylulose 5-phosphate + CO2. It participates in metabolic intermediate biosynthesis; 1-deoxy-D-xylulose 5-phosphate biosynthesis; 1-deoxy-D-xylulose 5-phosphate from D-glyceraldehyde 3-phosphate and pyruvate: step 1/1. Catalyzes the acyloin condensation reaction between C atoms 2 and 3 of pyruvate and glyceraldehyde 3-phosphate to yield 1-deoxy-D-xylulose-5-phosphate (DXP). This is 1-deoxy-D-xylulose-5-phosphate synthase from Geobacillus sp. (strain WCH70).